Reading from the N-terminus, the 481-residue chain is uncharacterized protein (481 aa).

10 consecutive transmembrane segments (helical) span residues 32-52, 82-102, 137-157, 173-193, 204-224, 258-278, 289-309, 348-368, 392-412, and 418-438; these read LSWLFMFICAGLGSSTLYWGV, FFHWGISAWATYTLASLIMAY, MFLIATVGALTISLVVTAATF, VQAFVILLSGGIFCLSSWIGI, VGWGAFLLPLLVLIVGPTEFI, WTVFYWLWWISYTPGVAMFVT, VIWGLILGSTVGCWFFFGVME, LFLAAYLGVMIIFLASHMDAV, LFWCVVITLIPLSILFTGASL, and TVVLTALPFLVILLVKVGGFI.

This sequence belongs to the BCCT transporter (TC 2.A.15) family.

The protein localises to the cell inner membrane. In terms of biological role, probable transporter whose substrate is unknown. Is not involved in aerobic D-malate transport. This is an uncharacterized protein from Escherichia coli (strain K12).